The sequence spans 279 residues: NADPH-dependent 7-cyano-7-deazaguanine reductase (279 aa).

86 to 88 serves as a coordination point for substrate; sequence IES. 88-89 lines the NADPH pocket; sequence SK. Cys-187 (thioimide intermediate) is an active-site residue. Asp-194 serves as the catalytic Proton donor. 226–227 serves as a coordination point for substrate; the sequence is HE. 255 to 256 contributes to the NADPH binding site; the sequence is RG.

The protein belongs to the GTP cyclohydrolase I family. QueF type 2 subfamily. In terms of assembly, homodimer.

The protein localises to the cytoplasm. The enzyme catalyses 7-aminomethyl-7-carbaguanine + 2 NADP(+) = 7-cyano-7-deazaguanine + 2 NADPH + 3 H(+). It participates in tRNA modification; tRNA-queuosine biosynthesis. Its function is as follows. Catalyzes the NADPH-dependent reduction of 7-cyano-7-deazaguanine (preQ0) to 7-aminomethyl-7-deazaguanine (preQ1). The protein is NADPH-dependent 7-cyano-7-deazaguanine reductase of Histophilus somni (strain 129Pt) (Haemophilus somnus).